The following is an 86-amino-acid chain: Omega-theraphotoxin-Hhn1f 1 (86 aa).

The signal sequence occupies residues 1 to 21 (MKSIVFVALFGLALLAVVCSA). Residues 22–50 (SEDAHKELLKEVVRAMVVDKTDAVQAEER) constitute a propeptide that is removed on maturation. 3 cysteine pairs are disulfide-bonded: C52–C66, C59–C71, and C65–C78.

Belongs to the neurotoxin 10 (Hwtx-1) family. 17 (Hntx-9) subfamily. Expressed by the venom gland.

The protein resides in the secreted. Ion channel inhibitor. This Cyriopagopus hainanus (Chinese bird spider) protein is Omega-theraphotoxin-Hhn1f 1.